A 176-amino-acid chain; its full sequence is Flavodoxin 1 (176 aa).

One can recognise a Flavodoxin-like domain in the interval 4-165 (HGIFFGSDTG…RVEKWVKQIS (162 aa)).

Belongs to the flavodoxin family. FMN is required as a cofactor.

Functionally, low-potential electron donor to a number of redox enzymes. The protein is Flavodoxin 1 (fldA) of Shigella flexneri.